We begin with the raw amino-acid sequence, 196 residues long: Probable inactive nicotinamidase At3g16190 (196 aa).

This sequence belongs to the isochorismatase family.

Functionally, does not possess nicotinamidase activity in vitro. In Arabidopsis thaliana (Mouse-ear cress), this protein is Probable inactive nicotinamidase At3g16190.